A 322-amino-acid chain; its full sequence is Atrochrysone carboxyl ACP thioesterase nsrC (322 aa).

Zn(2+) contacts are provided by His105, His107, Asp109, and His110. Residue Asp109 is the Proton donor/acceptor of the active site.

This sequence belongs to the metallo-beta-lactamase superfamily. Requires Zn(2+) as cofactor.

The catalysed reaction is atrochrysone carboxyl-[ACP] + H2O = atrochrysone carboxylate + holo-[ACP] + H(+). It functions in the pathway secondary metabolite biosynthesis. Functionally, atrochrysone carboxyl ACP thioesterase; part of the gene cluster that mediates the biosynthesis of the tetrahydroxanthone dimer neosartorin, which exhibits antibacterial activity. The two different monomeric units appear to be synthesized by the same set of enzymes, among which the Baeyer-Villiger monooxygenase nsrF is the key enzyme for the divergence of the biosynthetic routes. The pathway begins with the synthesis of atrochrysone thioester by the polyketide synthase nsrB. The atrochrysone carboxyl ACP thioesterase nsrC then breaks the thioester bond and releases the atrochrysone carboxylic acid from AacuL. Atrochrysone carboxylic acid is decarboxylated by the decarboxylase nsrE, and oxidized by the anthrone oxygenase nsrD to yield emodin. Emodin is then reduced to emodin hydroquinone by the oxidoreductase nsrR. A-ring reduction by the short chain dehydrogenase nsrJ, dehydration by the scytalone dehydratase-like protein nsrI and probable spontaneous re-oxidation, results in overall deoxygenation to chrysophanol. The Baeyer-Villiger monooxygenase nsrF accepts chrysophanol as a substrate to insert one oxygen atom at two different positions to yield the precursors of both monomric units. NsrF is promiscuous/flexible in interacting with the 2 (non methylated and methylated) aromatic rings of chrysophanol, thus diverging the biosynthetic pathway at this point. After the hydrolysis of the lactones, methylesterification by the methyltransferase nsrG yields respectively moniliphenone and 2,2',6'-trihydroxy-4-methyl-6-methoxya-cyldiphenylmethanone. The next steps are the hydroxylation by the FAD-dependent monooxygenase nsrK, followed by isomerization by the monooxygenase nsrQ. The short chain dehydrogenase/reductase nsrO then catalyzes the C-5 ketoreduction to give the xanthone skeleton of blennolide C and 5-acetylblennolide A. The acetyltransferase nsrL has a strict substrate specificity and uses only blennolide A but not blennolide C to yield 5-acetylblennolide A as the single-acetylated product. In the final step of the biosynthesis, the heterodimerization of the 2 xanthones, blennolide C and 5-acetylblennolide A, is catalyzed by the cytochrome P450 monooxygenase nsrP. NsrP can utilize at least three different xanthones as its substrates to perform the dimerization reaction. The protein is Atrochrysone carboxyl ACP thioesterase nsrC of Aspergillus novofumigatus (strain IBT 16806).